Reading from the N-terminus, the 512-residue chain is Glutamyl-tRNA(Gln) amidotransferase subunit A (512 aa).

Active-site charge relay system residues include Lys82 and Ser157. Catalysis depends on Ser181, which acts as the Acyl-ester intermediate.

The protein belongs to the amidase family. GatA subfamily. Heterotrimer of A, B and C subunits.

The enzyme catalyses L-glutamyl-tRNA(Gln) + L-glutamine + ATP + H2O = L-glutaminyl-tRNA(Gln) + L-glutamate + ADP + phosphate + H(+). Functionally, allows the formation of correctly charged Gln-tRNA(Gln) through the transamidation of misacylated Glu-tRNA(Gln) in organisms which lack glutaminyl-tRNA synthetase. The reaction takes place in the presence of glutamine and ATP through an activated gamma-phospho-Glu-tRNA(Gln). The polypeptide is Glutamyl-tRNA(Gln) amidotransferase subunit A (Bordetella pertussis (strain Tohama I / ATCC BAA-589 / NCTC 13251)).